We begin with the raw amino-acid sequence, 163 residues long: NADPH-dependent 7-cyano-7-deazaguanine reductase (163 aa).

Residues 1 to 10 (MSKPPRRSPR) show a composition bias toward basic residues. Residues 1–23 (MSKPPRRSPRKPTPASPELQLGH) are disordered. Cys-61 (thioimide intermediate) is an active-site residue. The active-site Proton donor is the Asp-68. Substrate is bound by residues 83–85 (LES) and 102–103 (HE).

The protein belongs to the GTP cyclohydrolase I family. QueF type 1 subfamily.

The protein resides in the cytoplasm. It catalyses the reaction 7-aminomethyl-7-carbaguanine + 2 NADP(+) = 7-cyano-7-deazaguanine + 2 NADPH + 3 H(+). The protein operates within tRNA modification; tRNA-queuosine biosynthesis. In terms of biological role, catalyzes the NADPH-dependent reduction of 7-cyano-7-deazaguanine (preQ0) to 7-aminomethyl-7-deazaguanine (preQ1). In Rhodopseudomonas palustris (strain BisA53), this protein is NADPH-dependent 7-cyano-7-deazaguanine reductase.